Consider the following 444-residue polypeptide: Maintenance of mitochondrial morphology protein 1 (444 aa).

Positions 1–16 are enriched in polar residues; that stretch reads MKGVENTLSQSESVNR. Positions 1-20 are disordered; that stretch reads MKGVENTLSQSESVNRGYNG. Over 1–107 the chain is Lumenal; sequence MKGVENTLSQ…TFSSRSFAEG (107 aa). A helical transmembrane segment spans residues 108–128; it reads LVVGQLSVIVVLIFFIKFFIF. The Cytoplasmic portion of the chain corresponds to 129–444; the sequence is SDGPAKTGGG…QEEDPSRAPE (316 aa). The tract at residues 136–157 is disordered; it reads GGGGGSSAESRSSGFTGSPLTS. Residues 142 to 157 are compositionally biased toward low complexity; that stretch reads SAESRSSGFTGSPLTS. One can recognise an SMP-LTD domain in the interval 204–418; it reads SPESLDWFNV…EPRFQFVKLP (215 aa). The interval 425–444 is disordered; it reads KNTREEKSDMQEEDPSRAPE. Residues 426–444 show a composition bias toward basic and acidic residues; sequence NTREEKSDMQEEDPSRAPE.

The protein belongs to the MMM1 family. Homodimer. Component of the ER-mitochondria encounter structure (ERMES) or MDM complex, composed of MMM1, MDM10, MDM12 and MDM34. An MMM1 homodimer associates with one molecule of MDM12 on each side in a pairwise head-to-tail manner, and the SMP-LTD domains of MMM1 and MDM12 generate a continuous hydrophobic tunnel for phospholipid trafficking.

Its subcellular location is the endoplasmic reticulum membrane. Its function is as follows. Component of the ERMES/MDM complex, which serves as a molecular tether to connect the endoplasmic reticulum (ER) and mitochondria. Components of this complex are involved in the control of mitochondrial shape and protein biogenesis, and function in nonvesicular lipid trafficking between the ER and mitochondria. The MDM12-MMM1 subcomplex functions in the major beta-barrel assembly pathway that is responsible for biogenesis of all outer membrane beta-barrel proteins, and acts in a late step after the SAM complex. The MDM10-MDM12-MMM1 subcomplex further acts in the TOM40-specific pathway after the action of the MDM12-MMM1 complex. Essential for establishing and maintaining the structure of mitochondria and maintenance of mtDNA nucleoids. The sequence is that of Maintenance of mitochondrial morphology protein 1 from Eremothecium gossypii (strain ATCC 10895 / CBS 109.51 / FGSC 9923 / NRRL Y-1056) (Yeast).